We begin with the raw amino-acid sequence, 420 residues long: UDP-N-acetylglucosamine 1-carboxyvinyltransferase (420 aa).

22–23 contributes to the phosphoenolpyruvate binding site; sequence KN. Residue arginine 93 coordinates UDP-N-acetyl-alpha-D-glucosamine. Cysteine 117 serves as the catalytic Proton donor. At cysteine 117 the chain carries 2-(S-cysteinyl)pyruvic acid O-phosphothioketal. Residues 122 to 126, aspartate 307, and valine 329 contribute to the UDP-N-acetyl-alpha-D-glucosamine site; that span reads RPVDL.

It belongs to the EPSP synthase family. MurA subfamily.

It is found in the cytoplasm. The catalysed reaction is phosphoenolpyruvate + UDP-N-acetyl-alpha-D-glucosamine = UDP-N-acetyl-3-O-(1-carboxyvinyl)-alpha-D-glucosamine + phosphate. It participates in cell wall biogenesis; peptidoglycan biosynthesis. Functionally, cell wall formation. Adds enolpyruvyl to UDP-N-acetylglucosamine. This is UDP-N-acetylglucosamine 1-carboxyvinyltransferase from Hahella chejuensis (strain KCTC 2396).